The sequence spans 402 residues: Plasminogen activator inhibitor 1 (402 aa).

The first 23 residues, 1–23, serve as a signal peptide directing secretion; sequence MRMSPVFACLALGLALIFGEGSA. N232, N288, and N352 each carry an N-linked (GlcNAc...) asparagine glycan.

The protein belongs to the serpin family. In terms of assembly, forms a heterodimer with TMPRSS7. Interacts with VTN. Binds LRP1B; binding is followed by internalization and degradation. Interacts with PPP1CB. In complex with PLAU/uPA, interacts with PLAUR/uPAR. Interacts with SORL1 and LRP1, either alone or in complex with PLAU; these interactions are abolished in the presence of LRPAP1/RAP. The ternary complex composed of PLAUR-PLAU-PAI1 also interacts with SORL1. Interacts with PLAT/tPA. Also interacts with SORL1, when complexed to PLAT/tPA. In terms of tissue distribution, vascular endothelial cells may be the primary site of synthesis of plasma PAI1.

Its subcellular location is the secreted. Functionally, serine protease inhibitor. Inhibits TMPRSS7. Is a primary inhibitor of tissue-type plasminogen activator (PLAT) and urokinase-type plasminogen activator (PLAU). As PLAT inhibitor, it is required for fibrinolysis down-regulation and is responsible for the controlled degradation of blood clots. As PLAU inhibitor, it is involved in the regulation of cell adhesion and spreading. Acts as a regulator of cell migration, independently of its role as protease inhibitor. It is required for stimulation of keratinocyte migration during cutaneous injury repair. It is involved in cellular and replicative senescence. Plays a role in alveolar type 2 cells senescence in the lung. Is involved in the regulation of cementogenic differentiation of periodontal ligament stem cells, and regulates odontoblast differentiation and dentin formation during odontogenesis. In Bos taurus (Bovine), this protein is Plasminogen activator inhibitor 1 (SERPINE1).